Consider the following 137-residue polypeptide: Large ribosomal subunit protein uL16 (137 aa).

The protein belongs to the universal ribosomal protein uL16 family. Part of the 50S ribosomal subunit.

Binds 23S rRNA and is also seen to make contacts with the A and possibly P site tRNAs. This chain is Large ribosomal subunit protein uL16, found in Nitratidesulfovibrio vulgaris (strain DSM 19637 / Miyazaki F) (Desulfovibrio vulgaris).